The following is a 148-amino-acid chain: Cystatin-C (148 aa).

Positions 1–30 (MVGSPRAPLLLLASLIVALALALAVSPAAA) are cleaved as a signal peptide. Gln31 is modified (pyrrolidone carboxylic acid). Positions 84–88 (QVVSG) match the Secondary area of contact motif. 2 disulfides stabilise this stretch: Cys102–Cys112 and Cys126–Cys146.

The protein localises to the secreted. In terms of biological role, this is a thiol proteinase inhibitor. The protein is Cystatin-C (CST3) of Bos taurus (Bovine).